Reading from the N-terminus, the 104-residue chain is Class I hydrophobin 4 (104 aa).

A signal peptide spans 1-16 (MFASTVFVSLLAVAAA). 4 cysteine pairs are disulfide-bonded: cysteine 26-cysteine 85, cysteine 34-cysteine 79, cysteine 35-cysteine 61, and cysteine 86-cysteine 99.

It belongs to the fungal hydrophobin family. As to quaternary structure, self-assembles to form functional amyloid fibrils called rodlets. Self-assembly into fibrillar rodlets occurs spontaneously at hydrophobic:hydrophilic interfaces and the rodlets further associate laterally to form amphipathic monolayers.

It is found in the secreted. The protein resides in the cell wall. In terms of biological role, aerial growth, conidiation, and dispersal of filamentous fungi in the environment rely upon a capability of their secreting small amphipathic proteins called hydrophobins (HPBs) with low sequence identity. Class I can self-assemble into an outermost layer of rodlet bundles on aerial cell surfaces, conferring cellular hydrophobicity that supports fungal growth, development and dispersal; whereas Class II form highly ordered films at water-air interfaces through intermolecular interactions but contribute nothing to the rodlet structure. HYD4 is a class I hydrophobin that negatively regulates aerial mycelial growth, conidiation, carotenoid and adenosine synthesis, resistance to oxidant stress, and fruiting body development. Seems not to be involved in the mycelial growth rate, the hydrophobicity of the mycelia and conidia, nor the conidial virulence on silkworm pupae. The sequence is that of Class I hydrophobin 4 from Cordyceps militaris (Caterpillar fungus).